A 91-amino-acid polypeptide reads, in one-letter code: Sec-independent protein translocase protein TatA (91 aa).

A helical membrane pass occupies residues 1–21 (MGAMSPWHWAIVALVVIILFG). A disordered region spans residues 44-91 (KEMQNDNSTPAPTAQQSAPAELPVADTTTAPVTPPAPVQPQHTEPKSA). Residues 51–74 (STPAPTAQQSAPAELPVADTTTAP) are compositionally biased toward low complexity.

The protein belongs to the TatA/E family. In terms of assembly, the Tat system comprises two distinct complexes: a TatABC complex, containing multiple copies of TatA, TatB and TatC subunits, and a separate TatA complex, containing only TatA subunits. Substrates initially bind to the TatABC complex, which probably triggers association of the separate TatA complex to form the active translocon.

It is found in the cell membrane. Its function is as follows. Part of the twin-arginine translocation (Tat) system that transports large folded proteins containing a characteristic twin-arginine motif in their signal peptide across membranes. TatA could form the protein-conducting channel of the Tat system. The polypeptide is Sec-independent protein translocase protein TatA (Rhodococcus jostii (strain RHA1)).